Reading from the N-terminus, the 377-residue chain is Spermidine/putrescine import ATP-binding protein PotA (377 aa).

The region spanning 18-248 (IRLSGISKSF…PKNLFVARFI (231 aa)) is the ABC transporter domain. 50-57 (GPSGCGKT) provides a ligand contact to ATP.

This sequence belongs to the ABC transporter superfamily. Spermidine/putrescine importer (TC 3.A.1.11.1) family. The complex is composed of two ATP-binding proteins (PotA), two transmembrane proteins (PotB and PotC) and a solute-binding protein (PotD).

Its subcellular location is the cell inner membrane. It carries out the reaction ATP + H2O + polyamine-[polyamine-binding protein]Side 1 = ADP + phosphate + polyamineSide 2 + [polyamine-binding protein]Side 1.. Part of the ABC transporter complex PotABCD involved in spermidine/putrescine import. Responsible for energy coupling to the transport system. The protein is Spermidine/putrescine import ATP-binding protein PotA of Vibrio cholerae serotype O1 (strain ATCC 39315 / El Tor Inaba N16961).